We begin with the raw amino-acid sequence, 283 residues long: Probable cytochrome c oxidase subunit 3 (283 aa).

6 helical membrane passes run 26–46, 51–71, 94–114, 179–199, 217–237, and 261–281; these read PWPV…VSFM, FNIY…YSWW, IGMA…FASF, CVTA…MQAY, FYLA…FLII, and AWYW…VYIF.

Belongs to the cytochrome c oxidase subunit 3 family.

The protein resides in the cell membrane. It catalyses the reaction 4 Fe(II)-[cytochrome c] + O2 + 8 H(+)(in) = 4 Fe(III)-[cytochrome c] + 2 H2O + 4 H(+)(out). The protein is Probable cytochrome c oxidase subunit 3 (ctaE) of Rickettsia conorii (strain ATCC VR-613 / Malish 7).